The following is a 309-amino-acid chain: Serpentine receptor class gamma-47 (309 aa).

The next 5 helical transmembrane spans lie at 22-42 (IVQMFYGTITVVFMLILLFLF), 140-160 (FKLYYVILCGISIFFTSVLPL), 190-210 (IYSSVYFIILLLVGIISIFYI), 230-250 (LITLVYGFLYSGILLWSILMA), and 272-292 (ISSDLITLSLPYILLIFDVGI).

Belongs to the nematode receptor-like protein srg family.

Its subcellular location is the membrane. The chain is Serpentine receptor class gamma-47 (srg-47) from Caenorhabditis elegans.